Reading from the N-terminus, the 320-residue chain is Lipoyl synthase (320 aa).

A compositionally biased stretch (basic and acidic residues) spans 1–24 (MIGKLVRDLKIPDQRHPEKAHRPD). A disordered region spans residues 1–30 (MIGKLVRDLKIPDQRHPEKAHRPDNVQPKK). Residues Cys-60, Cys-65, Cys-71, Cys-86, Cys-90, Cys-93, and Ser-300 each coordinate [4Fe-4S] cluster. The Radical SAM core domain occupies 72-289 (WSQGHATMMI…EKAAYGKGFL (218 aa)).

This sequence belongs to the radical SAM superfamily. Lipoyl synthase family. The cofactor is [4Fe-4S] cluster.

Its subcellular location is the cytoplasm. The enzyme catalyses [[Fe-S] cluster scaffold protein carrying a second [4Fe-4S](2+) cluster] + N(6)-octanoyl-L-lysyl-[protein] + 2 oxidized [2Fe-2S]-[ferredoxin] + 2 S-adenosyl-L-methionine + 4 H(+) = [[Fe-S] cluster scaffold protein] + N(6)-[(R)-dihydrolipoyl]-L-lysyl-[protein] + 4 Fe(3+) + 2 hydrogen sulfide + 2 5'-deoxyadenosine + 2 L-methionine + 2 reduced [2Fe-2S]-[ferredoxin]. The protein operates within protein modification; protein lipoylation via endogenous pathway; protein N(6)-(lipoyl)lysine from octanoyl-[acyl-carrier-protein]: step 2/2. In terms of biological role, catalyzes the radical-mediated insertion of two sulfur atoms into the C-6 and C-8 positions of the octanoyl moiety bound to the lipoyl domains of lipoate-dependent enzymes, thereby converting the octanoylated domains into lipoylated derivatives. This Cereibacter sphaeroides (strain ATCC 17029 / ATH 2.4.9) (Rhodobacter sphaeroides) protein is Lipoyl synthase.